A 761-amino-acid chain; its full sequence is Disintegrin and metalloproteinase domain-containing protein 24 (761 aa).

The N-terminal stretch at 1–34 is a signal peptide; that stretch reads MVAMSEALVHARITLLQAWLRMLLFSSVWPPTWC. Residues 35-200 constitute a propeptide that is removed on maturation; the sequence is AEYKGPPETV…GKSTRMQSIY (166 aa). The Extracellular segment spans residues 35–697; the sequence is AEYKGPPETV…SKKDAPEKPN (663 aa). N-linked (GlcNAc...) asparagine glycosylation is present at asparagine 140. The Cysteine switch signature appears at 172–179; the sequence is MRCGLTDE. Cysteine 174 serves as a coordination point for Zn(2+). One can recognise a Peptidase M12B domain in the interval 208–400; it reads LYIKLALVID…KSCIHREPRP (193 aa). N-linked (GlcNAc...) asparagine glycosylation is found at asparagine 227 and asparagine 301. Intrachain disulfides connect cysteine 323–cysteine 393, cysteine 357–cysteine 379, cysteine 359–cysteine 364, cysteine 465–cysteine 485, cysteine 635–cysteine 646, cysteine 640–cysteine 652, and cysteine 654–cysteine 663. Histidine 342 is a binding site for Zn(2+). The active site involves glutamate 343. The Zn(2+) site is built by histidine 346 and histidine 352. N-linked (GlcNAc...) asparagine glycosylation is found at asparagine 378, asparagine 390, and asparagine 479. Positions 406 to 493 constitute a Disintegrin domain; it reads LKVCGNGIVE…ECPEDLFVQD (88 aa). Residues 631 to 664 enclose the EGF-like domain; it reads WVNDCTPETCNMKGVCNNKQHCHCDVGWSPPNCQ. A helical transmembrane segment spans residues 698–718; sequence VIIWLLPIICVAVVLSVLFCL. Residues 719-761 are Cytoplasmic-facing; the sequence is SGATKKSREAAASQPAEERVKPPYEGAEPSYETVKPPDEWANP. A disordered region spans residues 725 to 761; sequence SREAAASQPAEERVKPPYEGAEPSYETVKPPDEWANP.

Monomer. The cofactor is Zn(2+). The prodomain is removed during sperm passage through the caput epididymis after the protein has reached the cell surface. Not processed in the secretory pathway. As to expression, expressed exclusively in testis and more specifically on the surface of mature sperm (at protein level).

The protein resides in the membrane. Its function is as follows. Plasma membrane protease present on mature sperm that may be involved in sperm function during epididymal maturation and/or fertilization. This Mus musculus (Mouse) protein is Disintegrin and metalloproteinase domain-containing protein 24.